Here is a 256-residue protein sequence, read N- to C-terminus: Imidazole glycerol phosphate synthase subunit HisF (256 aa).

Residues Asp11 and Asp130 contribute to the active site.

The protein belongs to the HisA/HisF family. In terms of assembly, heterodimer of HisH and HisF.

The protein localises to the cytoplasm. The catalysed reaction is 5-[(5-phospho-1-deoxy-D-ribulos-1-ylimino)methylamino]-1-(5-phospho-beta-D-ribosyl)imidazole-4-carboxamide + L-glutamine = D-erythro-1-(imidazol-4-yl)glycerol 3-phosphate + 5-amino-1-(5-phospho-beta-D-ribosyl)imidazole-4-carboxamide + L-glutamate + H(+). The protein operates within amino-acid biosynthesis; L-histidine biosynthesis; L-histidine from 5-phospho-alpha-D-ribose 1-diphosphate: step 5/9. Its function is as follows. IGPS catalyzes the conversion of PRFAR and glutamine to IGP, AICAR and glutamate. The HisF subunit catalyzes the cyclization activity that produces IGP and AICAR from PRFAR using the ammonia provided by the HisH subunit. This is Imidazole glycerol phosphate synthase subunit HisF from Prochlorococcus marinus (strain MIT 9301).